A 121-amino-acid polypeptide reads, in one-letter code: MIYPQTMLTVADNTGAKKVMCIRVLGGNKKYAKIGDTIIAVVKEALPNMPVKRSDVVRAVVVRTKKSIRRQDGMYIRFDDNAAVIVNMDNNPRGTRVFGPVAREIRDKNYSKIVSLAPEVL.

Belongs to the universal ribosomal protein uL14 family. As to quaternary structure, part of the 50S ribosomal subunit.

It is found in the plastid. The protein resides in the chloroplast. Its function is as follows. Binds to 23S rRNA. The sequence is that of Large ribosomal subunit protein uL14c from Phaeodactylum tricornutum (strain CCAP 1055/1).